A 247-amino-acid chain; its full sequence is Capsid protein (247 aa).

The Bipartite nuclear localization signal signature appears at Met-1 to Ala-28. Residues Met-1–Arg-39 are disordered. A compositionally biased stretch (basic residues) spans Ser-16 to Arg-26.

It belongs to the geminiviridae capsid protein family. As to quaternary structure, homomultimer. Interacts with the movement protein. Binds to single-stranded and double-stranded viral DNA.

Its subcellular location is the virion. The protein resides in the host nucleus. Functionally, encapsidates the viral genome into characteristic twinned ('geminate') particles. Binds the genomic viral ssDNA and shuttles it into and out of the cell nucleus. Plays a role in protection of the genome from degradation, virus acquisition and transmission by insect vectors, infectivity, and systemic movement. The CP of monopartite geminiviruses is absolutely essential for virus movement. In Megathyrsus maximus (PanSV), this protein is Capsid protein.